The sequence spans 67 residues: UPF0434 protein Bcep1808_2639 (67 aa).

Belongs to the UPF0434 family.

The sequence is that of UPF0434 protein Bcep1808_2639 from Burkholderia vietnamiensis (strain G4 / LMG 22486) (Burkholderia cepacia (strain R1808)).